Here is a 79-residue protein sequence, read N- to C-terminus: Cytochrome b (79 aa).

Transmembrane regions (helical) follow at residues 1-7 (SALFLAM), 31-52 (WLIR…YLHI), and 67-79 (WNIG…LTMA). Heme b is bound by residues His37 and His51.

The protein belongs to the cytochrome b family. In terms of assembly, the cytochrome bc1 complex contains 11 subunits: 3 respiratory subunits (MT-CYB, CYC1 and UQCRFS1), 2 core proteins (UQCRC1 and UQCRC2) and 6 low-molecular weight proteins (UQCRH/QCR6, UQCRB/QCR7, UQCRQ/QCR8, UQCR10/QCR9, UQCR11/QCR10 and a cleavage product of UQCRFS1). This cytochrome bc1 complex then forms a dimer. The cofactor is heme b.

Its subcellular location is the mitochondrion inner membrane. Component of the ubiquinol-cytochrome c reductase complex (complex III or cytochrome b-c1 complex) that is part of the mitochondrial respiratory chain. The b-c1 complex mediates electron transfer from ubiquinol to cytochrome c. Contributes to the generation of a proton gradient across the mitochondrial membrane that is then used for ATP synthesis. The polypeptide is Cytochrome b (MT-CYB) (Dipodomys panamintinus (Panamint kangaroo rat)).